A 350-amino-acid polypeptide reads, in one-letter code: Lipase chaperone (350 aa).

Residues 12-32 form a helical membrane-spanning segment; that stretch reads IVLYLILGCVVVCGVWYSFDV.

This sequence belongs to the lipase chaperone family.

It is found in the cell inner membrane. In terms of biological role, may be involved in the folding of the extracellular lipase during its passage through the periplasm. The chain is Lipase chaperone (lifO) from Xylella fastidiosa (strain 9a5c).